Here is a 160-residue protein sequence, read N- to C-terminus: Transcription elongation factor GreA (160 aa).

Positions 1–72 (MAEKTYVMTL…QIQILETKIR (72 aa)) form a coiled coil.

The protein belongs to the GreA/GreB family.

Functionally, necessary for efficient RNA polymerase transcription elongation past template-encoded arresting sites. The arresting sites in DNA have the property of trapping a certain fraction of elongating RNA polymerases that pass through, resulting in locked ternary complexes. Cleavage of the nascent transcript by cleavage factors such as GreA or GreB allows the resumption of elongation from the new 3'terminus. GreA releases sequences of 2 to 3 nucleotides. The chain is Transcription elongation factor GreA from Streptococcus thermophilus (strain CNRZ 1066).